Here is a 240-residue protein sequence, read N- to C-terminus: Ubiquitin domain-containing protein 1 (240 aa).

Residues 1-48 (MGGCVGRPQGESQRSQSRASGQQRKRAGRNEPLKKERPRWKSDYPMTD) form a disordered region. A compositionally biased stretch (low complexity) spans 12–22 (SQRSQSRASGQ). The span at 28-42 (GRNEPLKKERPRWKS) shows a compositional bias: basic and acidic residues. Residues 153 to 228 (FQLKVRLSTG…DTSYCKPATR (76 aa)) form the Ubiquitin-like domain.

In terms of biological role, may be involved in the regulation of cellular senescence through a positive feedback loop with TP53. This chain is Ubiquitin domain-containing protein 1 (ubtd1), found in Xenopus tropicalis (Western clawed frog).